A 2148-amino-acid chain; its full sequence is Polyketide synthase 1 (2148 aa).

Residues 19–261 (FIFGDQSSCN…TPLAVHAPYH (243 aa)) are N-terminal acylcarrier protein transacylase domain (SAT). Residues 394–829 (DSKIAIIGMS…GGNTALLVED (436 aa)) enclose the Ketosynthase family 3 (KS3) domain. Active-site for beta-ketoacyl synthase activity residues include C566, H701, and H745. The malonyl-CoA:ACP transacylase (MAT) domain stretch occupies residues 929 to 1233 (AFVFSGQGSQ…PSLMRNKDGW (305 aa)). S1018 serves as the catalytic For acyl/malonyl transferase activity. The tract at residues 1310–1624 (TASVHRIVHE…RKVLNTAMPP (315 aa)) is product template (PT) domain. The interval 1314-1447 (HRIVHESVDK…SSLHFEQPKV (134 aa)) is N-terminal hotdog fold. The region spanning 1314–1619 (HRIVHESVDK…FQGIPRKVLN (306 aa)) is the PKS/mFAS DH domain. H1346 (proton acceptor; for dehydratase activity) is an active-site residue. The tract at residues 1474 to 1619 (LNSRMSSGVI…FQGIPRKVLN (146 aa)) is C-terminal hotdog fold. D1533 acts as the Proton donor; for dehydratase activity in catalysis. A disordered region spans residues 1619 to 1655 (NTAMPPPKSQNEAQVHSSPAKSRPKPPGSASSVHSGR). The segment covering 1627 to 1638 (SQNEAQVHSSPA) has biased composition (polar residues). A Carrier 1 domain is found at 1678-1752 (RDPMQALFKI…DLATHLGFDT (75 aa)). At S1712 the chain carries O-(pantetheine 4'-phosphoryl)serine. Residues 1756–1769 (DQSSGQSSSCGGLS) show a composition bias toward low complexity. The disordered stretch occupies residues 1756-1796 (DQSSGQSSSCGGLSPRSDSTGEITSNATTPPSLSPRGSVSG). Residues 1771 to 1796 (RSDSTGEITSNATTPPSLSPRGSVSG) show a composition bias toward polar residues. The Carrier 2 domain maps to 1793–1870 (SVSGSQCKDV…SFKHMFQQGH (78 aa)). S1830 is modified (O-(pantetheine 4'-phosphoryl)serine). The thioesterase (TE) domain stretch occupies residues 1882–2146 (LKQYRATSTL…ERVAAFIRST (265 aa)). Catalysis depends on S1973, which acts as the For thioesterase activity.

Its function is as follows. Polyketide synthase; part of the Pks1 gene cluster that mediates the biosynthesis of an anthraquinone derivative pigment that contributes to conidial pigmentation that provides protection from UV radiation, heat and cold stress. The polyketide synthase Pks1 produces 1-acetyl-2,4,6,8-tetrahydroxy-9,10-anthraquinone though condensation of acetyl-CoA with malonyl-CoA. The dehydratase EthD and the laccase Mlac1 further convert the anthraquinone derivative into the final conidial pigment. This chain is Polyketide synthase 1, found in Metarhizium acridum (strain CQMa 102).